Here is a 186-residue protein sequence, read N- to C-terminus: Dihydrofolate reductase (186 aa).

The DHFR domain occupies 2–180; that stretch reads RLNVVVAVSE…FTFKFCVYDV (179 aa). NADP(+)-binding positions include Ala8 and 14–20; that span reads GIGKGGG. Residue 28 to 33 coordinates substrate; the sequence is DMEFFK. 51–53 contacts NADP(+); sequence RVT. Residue Arg67 participates in substrate binding. NADP(+) contacts are provided by residues 73–75 and 112–119; these read SST and GGYRLYKE.

This sequence belongs to the dihydrofolate reductase family. In terms of assembly, monomer.

The catalysed reaction is (6S)-5,6,7,8-tetrahydrofolate + NADP(+) = 7,8-dihydrofolate + NADPH + H(+). It participates in cofactor biosynthesis; tetrahydrofolate biosynthesis; 5,6,7,8-tetrahydrofolate from 7,8-dihydrofolate: step 1/1. Functionally, key enzyme in folate metabolism. Contributes to the de novo mitochondrial thymidylate biosynthesis pathway. Catalyzes an essential reaction for de novo glycine and purine synthesis, and for DNA precursor synthesis. The sequence is that of Dihydrofolate reductase from Schistosoma mansoni (Blood fluke).